The chain runs to 482 residues: Glutamyl-tRNA(Gln) amidotransferase subunit A (482 aa).

Active-site charge relay system residues include K74 and S149. The active-site Acyl-ester intermediate is the S173.

The protein belongs to the amidase family. GatA subfamily. In terms of assembly, heterotrimer of A, B and C subunits.

It catalyses the reaction L-glutamyl-tRNA(Gln) + L-glutamine + ATP + H2O = L-glutaminyl-tRNA(Gln) + L-glutamate + ADP + phosphate + H(+). Its function is as follows. Allows the formation of correctly charged Gln-tRNA(Gln) through the transamidation of misacylated Glu-tRNA(Gln) in organisms which lack glutaminyl-tRNA synthetase. The reaction takes place in the presence of glutamine and ATP through an activated gamma-phospho-Glu-tRNA(Gln). The polypeptide is Glutamyl-tRNA(Gln) amidotransferase subunit A (Prochlorococcus marinus (strain MIT 9215)).